Here is a 438-residue protein sequence, read N- to C-terminus: Xanthine permease (438 aa).

The next 13 membrane-spanning stretches (helical) occupy residues 11–31 (LGIQ…LIVG), 41–61 (LTYL…LQVW), 65–85 (FFGI…SPMI), 100–120 (IIAS…LVSF), 121–141 (FPPV…MPVA), 154–174 (FGDL…VLLY), 180–200 (FIKS…AYFM), 220–240 (FYFG…IVAI), 272–292 (AEGL…TAFS), 308–328 (VIVV…IAAF), 331–351 (IIPS…VIAY), 367–387 (LLIV…PDIF), and 396–416 (LLTT…NIVY).

Belongs to the nucleobase:cation symporter-2 (NCS2) (TC 2.A.40) family.

It localises to the cell membrane. In terms of biological role, transport of xanthine in the cell. In Bacillus subtilis (strain 168), this protein is Xanthine permease (pbuX).